The primary structure comprises 88 residues: Small ribosomal subunit protein uS17 (88 aa).

The protein belongs to the universal ribosomal protein uS17 family. In terms of assembly, part of the 30S ribosomal subunit.

Its function is as follows. One of the primary rRNA binding proteins, it binds specifically to the 5'-end of 16S ribosomal RNA. The chain is Small ribosomal subunit protein uS17 from Maridesulfovibrio salexigens (strain ATCC 14822 / DSM 2638 / NCIMB 8403 / VKM B-1763) (Desulfovibrio salexigens).